Here is a 144-residue protein sequence, read N- to C-terminus: Large ribosomal subunit protein uL11 (144 aa).

The protein belongs to the universal ribosomal protein uL11 family. In terms of assembly, part of the ribosomal stalk of the 50S ribosomal subunit. Interacts with L10 and the large rRNA to form the base of the stalk. L10 forms an elongated spine to which L12 dimers bind in a sequential fashion forming a multimeric L10(L12)X complex. Contacts the CTC protein (RL25). Post-translationally, one or more lysine residues are methylated.

Its function is as follows. Forms part of the ribosomal stalk which helps the ribosome interact with GTP-bound translation factors. In Deinococcus radiodurans (strain ATCC 13939 / DSM 20539 / JCM 16871 / CCUG 27074 / LMG 4051 / NBRC 15346 / NCIMB 9279 / VKM B-1422 / R1), this protein is Large ribosomal subunit protein uL11.